A 310-amino-acid polypeptide reads, in one-letter code: Mitochondrial citrate transporter E (310 aa).

3 Solcar repeats span residues 2–95 (STTT…LRQG), 107–199 (QSLG…AKRR), and 208–293 (DGPG…TNKI). 6 consecutive transmembrane segments (helical) span residues 8–28 (FIAG…FETV), 72–92 (GSAY…YEPL), 114–133 (LAGA…FFLV), 178–198 (AMVR…FAKR), 211–228 (GLHL…CCVM), and 265–286 (IYKG…TLSL).

This sequence belongs to the mitochondrial carrier (TC 2.A.29) family.

It localises to the mitochondrion inner membrane. Its function is as follows. Mitochondrial transporter that does not mediate citrate export from mitochondria to cytoplasm. Its exact function has still to be determined. The protein is Mitochondrial citrate transporter E of Aspergillus niger (strain ATCC 1015 / CBS 113.46 / FGSC A1144 / LSHB Ac4 / NCTC 3858a / NRRL 328 / USDA 3528.7).